Reading from the N-terminus, the 158-residue chain is Probable inactive acireductone dioxygenase 2 (158 aa).

It belongs to the acireductone dioxygenase (ARD) family.

The protein resides in the cytoplasm. The protein localises to the nucleus. In terms of biological role, probable inactive acireductone dioxygenase. The sequence is that of Probable inactive acireductone dioxygenase 2 from Caenorhabditis elegans.